The primary structure comprises 827 residues: MFKNMTLLGTLIEHSDGLPLLETNMKNMHKDHNQDASLTLLASKYNVLFPGIYMPMTLENASIIRLVKKVYETGGIIGIVAQKKEDVEATSAQDIFTIGTTARILKLINLPDERVRILLQGEEKFQIEDVIAETPYLLASISRLKDKTSNTQSKHFKAVVSSIKETVAKLISLQPEFPTEIKLLLDNINDFNLLTYFLASGLDTDIKSKQKLLEIHDSKKRGTVLLKYLLKDLEVSKLRKKIQDKVHTDIEQLQHDFYIRRQIKVLQEELGENEFEDEIDELRAEGEKKQWPKEVADYFYKALDKAERLSPNSADYPVLISHAELMLELPWSVYTTDNMDLKMAKKVLDTEHYGLEKVKERLLEYLAVRKLTQNMKGPILCLYGPPGVGKTSLGKSIAKALNRKYVKVSLGGLHDEAEIRGHRKTYVGAMPGRIIKGIQNSGSSNPVFMLDELDKITDLRGDPAAALLEVLDPEQNQAFVDTFLEVPYDLSKVLFIATANQLDTIPPALRDRLEIIEINGYTIEEKLQIAKKYLFPKQRKENGLKATDLSIHDTAIVKVIESYTRESGVRELDRKLASLVRKVGKAMVLEEPYPKKIHKEDVISLLGIELFDQEMYQQTHLPGVAIGLAWTPVGGDILFIEAILSAGKGKLTLSGQLGDVMKESAMTAFTYLKANTNLLGIPDKVFESYDLHIHLPAGAVPKDGPSAGITLFAALASLYTQRKVKDKVAMTGEITLRGKVLPVGGIKEKILAAKRAGIKEVILSKENKKDIQEIKQKDIQDLKFHYVEFVEEVIQLALQPSKVEAAKDWSITKKRKQQPGIGHVSTL.

In terms of domain architecture, Lon N-terminal spans 38–233 (LTLLASKYNV…VLLKYLLKDL (196 aa)). 384–391 (GPPGVGKT) contributes to the ATP binding site. Residues 619-800 (THLPGVAIGL…EEVIQLALQP (182 aa)) form the Lon proteolytic domain. Catalysis depends on residues serine 706 and lysine 749.

This sequence belongs to the peptidase S16 family. Homohexamer. Organized in a ring with a central cavity.

The protein localises to the cytoplasm. It carries out the reaction Hydrolysis of proteins in presence of ATP.. ATP-dependent serine protease that mediates the selective degradation of mutant and abnormal proteins as well as certain short-lived regulatory proteins. Required for cellular homeostasis and for survival from DNA damage and developmental changes induced by stress. Degrades polypeptides processively to yield small peptide fragments that are 5 to 10 amino acids long. Binds to DNA in a double-stranded, site-specific manner. This chain is Lon protease, found in Amoebophilus asiaticus (strain 5a2).